Reading from the N-terminus, the 50-residue chain is Small ribosomal subunit protein uS14 (50 aa).

Zn(2+) contacts are provided by Cys15, Cys18, Cys33, and Cys36.

This sequence belongs to the universal ribosomal protein uS14 family. Zinc-binding uS14 subfamily. As to quaternary structure, part of the 30S ribosomal subunit. The cofactor is Zn(2+).

Its function is as follows. Binds 16S rRNA, required for the assembly of 30S particles. The sequence is that of Small ribosomal subunit protein uS14 from Methanococcoides burtonii (strain DSM 6242 / NBRC 107633 / OCM 468 / ACE-M).